A 394-amino-acid chain; its full sequence is Elongation factor Tu (394 aa).

The 195-residue stretch at 10-204 (KPHVNVGTIG…AMDDYIPAPE (195 aa)) folds into the tr-type G domain. Residues 19-26 (GHVDHGKT) form a G1 region. GTP is bound at residue 19–26 (GHVDHGKT). A Mg(2+)-binding site is contributed by T26. The interval 60-64 (GITIN) is G2. The segment at 81–84 (DCPG) is G3. Residues 81–85 (DCPGH) and 136–139 (NKCD) each bind GTP. Residues 136 to 139 (NKCD) are G4. A G5 region spans residues 174-176 (SAL).

It belongs to the TRAFAC class translation factor GTPase superfamily. Classic translation factor GTPase family. EF-Tu/EF-1A subfamily. Monomer.

The protein resides in the cytoplasm. It carries out the reaction GTP + H2O = GDP + phosphate + H(+). In terms of biological role, GTP hydrolase that promotes the GTP-dependent binding of aminoacyl-tRNA to the A-site of ribosomes during protein biosynthesis. The protein is Elongation factor Tu of Francisella tularensis subsp. tularensis (strain FSC 198).